A 340-amino-acid chain; its full sequence is Putative inactive cytochrome P450 family member 4Z2 (340 aa).

The Cytoplasmic segment spans residues 1 to 9 (MEPSWLQEL). Residues 10 to 30 (MAHPFLLLILLCMSLLLFQVI) form a helical; Signal-anchor for type II membrane protein membrane-spanning segment. Residues 31 to 340 (RLYQRRRWTI…AKYPEHQQRC (310 aa)) are Lumenal-facing.

This sequence belongs to the cytochrome P450 family. It depends on heme as a cofactor. In terms of tissue distribution, detected at low levels in mammary gland and mammary carcinoma.

The protein localises to the membrane. The polypeptide is Putative inactive cytochrome P450 family member 4Z2 (CYP4Z2P) (Homo sapiens (Human)).